Reading from the N-terminus, the 540-residue chain is Chaperonin GroEL (540 aa).

ATP contacts are provided by residues 29-32, 86-90, glycine 413, 476-478, and aspartate 492; these read TLGP, DGTTT, and NAA.

This sequence belongs to the chaperonin (HSP60) family. As to quaternary structure, forms a cylinder of 14 subunits composed of two heptameric rings stacked back-to-back. Interacts with the co-chaperonin GroES.

It localises to the cytoplasm. The enzyme catalyses ATP + H2O + a folded polypeptide = ADP + phosphate + an unfolded polypeptide.. Together with its co-chaperonin GroES, plays an essential role in assisting protein folding. The GroEL-GroES system forms a nano-cage that allows encapsulation of the non-native substrate proteins and provides a physical environment optimized to promote and accelerate protein folding. This is Chaperonin GroEL from Tsukamurella paurometabola (Corynebacterium paurometabolum).